The chain runs to 1401 residues: DNA-directed RNA polymerase subunit beta'' (1401 aa).

Zn(2+) contacts are provided by cysteine 224, cysteine 294, cysteine 301, and cysteine 304.

The protein belongs to the RNA polymerase beta' chain family. RpoC2 subfamily. In terms of assembly, in plastids the minimal PEP RNA polymerase catalytic core is composed of four subunits: alpha, beta, beta', and beta''. When a (nuclear-encoded) sigma factor is associated with the core the holoenzyme is formed, which can initiate transcription. The cofactor is Zn(2+).

Its subcellular location is the plastid. It is found in the chloroplast. The catalysed reaction is RNA(n) + a ribonucleoside 5'-triphosphate = RNA(n+1) + diphosphate. DNA-dependent RNA polymerase catalyzes the transcription of DNA into RNA using the four ribonucleoside triphosphates as substrates. This is DNA-directed RNA polymerase subunit beta'' from Nymphaea alba (White water-lily).